The sequence spans 483 residues: Zinc finger CCCH domain-containing protein 25 (483 aa).

Residues 157-184 form a C3H1-type zinc finger; it reads RNRAHICSFFIRGECTRGDECPYRHEMP. The 74-residue stretch at 228-301 folds into the RRM domain; it reads RTLYVGGLNS…QRLKLTWGRP (74 aa). Disordered stretches follow at residues 298–317 and 336–483; these read WGRPQVPKPDQDGSNQQGSV and PPML…GSSQ. Over residues 336–351 the composition is skewed to pro residues; the sequence is PPMLQYYMHPPPPQPP. A compositionally biased stretch (low complexity) spans 370 to 380; it reads SSSKESGSSTS. A compositionally biased stretch (polar residues) spans 381-391; that stretch reads DNRGASSSSYT. 2 stretches are compositionally biased toward low complexity: residues 392 to 401 and 409 to 423; these read MPPHGHYPQH and YGGYMQPPYQQYPPY. The span at 438 to 459 shows a compositional bias: pro residues; it reads QPGPGSRPNPPHPSSVSAPPPD. Positions 460–476 are enriched in low complexity; sequence SVSAAPSGSSQQSADAA.

The polypeptide is Zinc finger CCCH domain-containing protein 25 (Arabidopsis thaliana (Mouse-ear cress)).